A 1131-amino-acid chain; its full sequence is Filamin A-interacting protein 1-like (1131 aa).

The disordered stretch occupies residues Met1–Thr62. Basic and acidic residues predominate over residues Val50 to Thr62. Coiled coils occupy residues Asn139 to Val583 and Ser610 to Arg780. Ser789 is subject to Phosphoserine. Phosphothreonine occurs at positions 984 and 992. Phosphoserine is present on Ser1050.

The protein belongs to the FILIP1 family.

The protein localises to the cytoplasm. Its subcellular location is the membrane. It localises to the nucleus. In terms of biological role, acts as a regulator of the antiangiogenic activity on endothelial cells. When overexpressed in endothelial cells, leads to inhibition of cell proliferation and migration and an increase in apoptosis. Inhibits melanoma growth When expressed in tumor-associated vasculature. The sequence is that of Filamin A-interacting protein 1-like (Filip1l) from Mus musculus (Mouse).